Reading from the N-terminus, the 550-residue chain is Cytochrome P450 monooxygenase FFUJ_09176 (550 aa).

Positions 1–31 (MLQTIPMPSRELTIALAVLSLLMVLVQRAGS) are cleaved as a signal peptide. The span at 430 to 441 (FIPERFEGDTRS) shows a compositional bias: basic and acidic residues. The interval 430 to 451 (FIPERFEGDTRSSQESAASPDV) is disordered. Residue Cys-466 participates in heme binding.

Belongs to the cytochrome P450 family.

In terms of biological role, cytochrome P450 monooxygenase; part of the DMATS1 gene cluster that mediates the biosynthesis of a reversely N-prenylated monomeric L-tryptophan (r-N-DMAT). Seems not to contribute to the final DMATS1 product. In Gibberella fujikuroi (strain CBS 195.34 / IMI 58289 / NRRL A-6831) (Bakanae and foot rot disease fungus), this protein is Cytochrome P450 monooxygenase FFUJ_09176.